We begin with the raw amino-acid sequence, 903 residues long: Protein translocase subunit SecA (903 aa).

Residues glutamine 87, 105–109 (GEGKT), and aspartate 513 contribute to the ATP site. The span at 840–853 (MEAQRRAQAEEAAR) shows a compositional bias: basic and acidic residues. The interval 840-903 (MEAQRRAQAE…KYKQCHGQIN (64 aa)) is disordered. Residues cysteine 887, cysteine 889, cysteine 898, and histidine 899 each coordinate Zn(2+).

The protein belongs to the SecA family. Monomer and homodimer. Part of the essential Sec protein translocation apparatus which comprises SecA, SecYEG and auxiliary proteins SecDF-YajC and YidC. The cofactor is Zn(2+).

The protein resides in the cell inner membrane. The protein localises to the cytoplasm. The enzyme catalyses ATP + H2O + cellular proteinSide 1 = ADP + phosphate + cellular proteinSide 2.. In terms of biological role, part of the Sec protein translocase complex. Interacts with the SecYEG preprotein conducting channel. Has a central role in coupling the hydrolysis of ATP to the transfer of proteins into and across the cell membrane, serving both as a receptor for the preprotein-SecB complex and as an ATP-driven molecular motor driving the stepwise translocation of polypeptide chains across the membrane. This chain is Protein translocase subunit SecA, found in Vibrio cholerae serotype O1 (strain M66-2).